Reading from the N-terminus, the 367-residue chain is Chorismate synthase (367 aa).

An NADP(+)-binding site is contributed by Arg-48. Residues 125-127 (RSS), 243-244 (NA), Gly-283, 298-302 (KPTSS), and Arg-324 each bind FMN.

It belongs to the chorismate synthase family. As to quaternary structure, homotetramer. Requires FMNH2 as cofactor.

The catalysed reaction is 5-O-(1-carboxyvinyl)-3-phosphoshikimate = chorismate + phosphate. Its pathway is metabolic intermediate biosynthesis; chorismate biosynthesis; chorismate from D-erythrose 4-phosphate and phosphoenolpyruvate: step 7/7. Its function is as follows. Catalyzes the anti-1,4-elimination of the C-3 phosphate and the C-6 proR hydrogen from 5-enolpyruvylshikimate-3-phosphate (EPSP) to yield chorismate, which is the branch point compound that serves as the starting substrate for the three terminal pathways of aromatic amino acid biosynthesis. This reaction introduces a second double bond into the aromatic ring system. This Psychrobacter sp. (strain PRwf-1) protein is Chorismate synthase.